The following is a 577-amino-acid chain: ER degradation-enhancing alpha-mannosidase-like protein 2 (577 aa).

A signal peptide spans 1–21 (MPFRLLIPLGLVCVLLPLHHG). Asn90, Asn112, Asn289, and Asn450 each carry an N-linked (GlcNAc...) asparagine glycan. Residues 513–561 (PKRAQRKTVRSGPWEPQSGPATLSSPANQPREKQPAQQRTPLLSCPSQP) form a disordered region. Polar residues-rich tracts occupy residues 531–540 (GPATLSSPAN) and 547–561 (PAQQ…PSQP).

The protein belongs to the glycosyl hydrolase 47 family. N-glycosylated.

It localises to the endoplasmic reticulum lumen. Functionally, involved in the endoplasmic reticulum-associated degradation (ERAD) pathway that targets misfolded glycoproteins for degradation in an N-glycan-dependent manner. May initiate ERAD by promoting the first mannose trimming step of ERAD substrates, from Man9GlcNAc2 to Man8GlcNAc2. Seems to recognize and bind to exposed hydrophobic regions in target proteins. The polypeptide is ER degradation-enhancing alpha-mannosidase-like protein 2 (Mus musculus (Mouse)).